A 453-amino-acid chain; its full sequence is Transcription factor radR (453 aa).

A compositionally biased stretch (polar residues) spans 1–30; the sequence is MPNNLQHQEGSYSLRSSNDVSPADDWTQTN. The interval 1-45 is disordered; it reads MPNNLQHQEGSYSLRSSNDVSPADDWTQTNDPKEKKRIQNRVAQR. The bZIP domain occupies 30–62; the sequence is NDPKEKKRIQNRVAQRTYRNRIRARLEELENKI. The basic motif stretch occupies residues 33–50; that stretch reads KEKKRIQNRVAQRTYRNR. The segment at 51–58 is leucine-zipper; sequence IRARLEEL. The tract at residues 160–184 is disordered; it reads APRAAQARSIAPTSTGMHQISPSYG. Residues 170 to 181 are compositionally biased toward polar residues; that stretch reads APTSTGMHQISP.

Belongs to the bZIP family.

It localises to the nucleus. Its function is as follows. Transcription factor that positively regulates the expression of the gene clusters that mediate the biosynthesis of pestheic acid, a diphenyl ether which is a biosynthetic precursor of the unique chloropupukeananes. The sequence is that of Transcription factor radR from Floropilus chiversii (Chaetomium chiversii).